Here is a 777-residue protein sequence, read N- to C-terminus: 1,4-alpha-glucan branching enzyme GlgB (777 aa).

Residue D408 is the Nucleophile of the active site. E461 (proton donor) is an active-site residue.

This sequence belongs to the glycosyl hydrolase 13 family. GlgB subfamily. Monomer.

The enzyme catalyses Transfers a segment of a (1-&gt;4)-alpha-D-glucan chain to a primary hydroxy group in a similar glucan chain.. It participates in glycan biosynthesis; glycogen biosynthesis. Its function is as follows. Catalyzes the formation of the alpha-1,6-glucosidic linkages in glycogen by scission of a 1,4-alpha-linked oligosaccharide from growing alpha-1,4-glucan chains and the subsequent attachment of the oligosaccharide to the alpha-1,6 position. This chain is 1,4-alpha-glucan branching enzyme GlgB, found in Actinobacillus pleuropneumoniae serotype 7 (strain AP76).